Consider the following 498-residue polypeptide: ATP synthase subunit beta, chloroplastic (498 aa).

172–179 contributes to the ATP binding site; sequence GGAGVGKT.

The protein belongs to the ATPase alpha/beta chains family. F-type ATPases have 2 components, CF(1) - the catalytic core - and CF(0) - the membrane proton channel. CF(1) has five subunits: alpha(3), beta(3), gamma(1), delta(1), epsilon(1). CF(0) has four main subunits: a(1), b(1), b'(1) and c(9-12).

The protein resides in the plastid. It localises to the chloroplast thylakoid membrane. It catalyses the reaction ATP + H2O + 4 H(+)(in) = ADP + phosphate + 5 H(+)(out). Its function is as follows. Produces ATP from ADP in the presence of a proton gradient across the membrane. The catalytic sites are hosted primarily by the beta subunits. This Whiteheadia bifolia (Elephants ears) protein is ATP synthase subunit beta, chloroplastic.